The following is a 1521-amino-acid chain: Suppressor of Ty 6 homolog (1521 aa).

The tract at residues 1 to 204 (MDFIDNQAEE…EGAEDDARDV (204 aa)) is disordered. Over residues 26-41 (KKMKMAKDKLKKKKKV) the composition is skewed to basic residues. The Nuclear localization signal motif lies at 26–42 (KKMKMAKDKLKKKKKVV). Acidic residues-rich tracts occupy residues 45 to 56 (SDEDEDDEDDEE) and 67 to 76 (ADEDDEEEDA). Residues 77 to 89 (RSEKSDRSRRSEI) show a composition bias toward basic and acidic residues. A compositionally biased stretch (acidic residues) spans 90–103 (NDELDDEDLDLIDE). Positions 127-149 (PIRRSNQDDDDLQSERGSDDGDK) are enriched in basic and acidic residues. Over residues 167–177 (RSEDDFIEDDG) the composition is skewed to acidic residues. The 70-residue stretch at 1182 to 1251 (LNAGRPGGCV…EKFSILLSCK (70 aa)) folds into the S1 motif domain. Positions 1299-1388 (HPNFHNVSYE…IARFVLPMIQ (90 aa)) constitute an SH2 domain. A disordered region spans residues 1490–1521 (GIRSSLSYRPTGRTGPPPSAPYQQPPQQQYYR). Residues 1504–1513 (GPPPSAPYQQ) show a composition bias toward pro residues.

The protein belongs to the SPT6 family. Interacts with glp-1 and lin-12.

The protein resides in the nucleus. Its function is as follows. Histone H3-H4 chaperone that plays a role in maintenance of chromatin structure during RNA polymerase II transcription elongation. May be required for several aspects of morphogenesis of C.briggsae, including regulation of division in the germline and gut and specification of ventral-uterine precursor cell fate. The sequence is that of Suppressor of Ty 6 homolog (emb-5) from Caenorhabditis briggsae.